A 332-amino-acid chain; its full sequence is MDPRSEVLLRQRHLFATPLLLAGLPADDLLAELPQAQGWSWHAGEQAQLDARFPGRSRFDTRAPTGAWTSAVLFLPKSRELTDYLLASLAARLPGGELFLVGEKRGGIERASKQLAAYGKPRKLDSARHCQLWQVRIEQAPAEPDLHALAQRYSLPLADGELQVVSLPGVFSHGRLDRGSALLLGQLQALPGGHLLDFGCGAGVLGAALKRRYPASRLTLLDVDAFAVESSRLTLAANGLDGEVIAADGIDGAPRELAAIVSNPPFHQGVHTDYQASERLLQRAAEHLAPGGELRLVANSFLKYPPLIERHLGPCRTLAEGDGFRIYSARRS.

Belongs to the methyltransferase superfamily. RsmC family. In terms of assembly, monomer.

It localises to the cytoplasm. The enzyme catalyses guanosine(1207) in 16S rRNA + S-adenosyl-L-methionine = N(2)-methylguanosine(1207) in 16S rRNA + S-adenosyl-L-homocysteine + H(+). Its function is as follows. Specifically methylates the guanine in position 1207 of 16S rRNA in the 30S particle. The chain is Ribosomal RNA small subunit methyltransferase C from Pseudomonas aeruginosa (strain LESB58).